The chain runs to 209 residues: Nucleoside triphosphate pyrophosphatase (209 aa).

The active-site Proton acceptor is the D79.

It belongs to the Maf family. A divalent metal cation is required as a cofactor.

The protein resides in the cytoplasm. It carries out the reaction a ribonucleoside 5'-triphosphate + H2O = a ribonucleoside 5'-phosphate + diphosphate + H(+). It catalyses the reaction a 2'-deoxyribonucleoside 5'-triphosphate + H2O = a 2'-deoxyribonucleoside 5'-phosphate + diphosphate + H(+). Its function is as follows. Nucleoside triphosphate pyrophosphatase. May have a dual role in cell division arrest and in preventing the incorporation of modified nucleotides into cellular nucleic acids. This chain is Nucleoside triphosphate pyrophosphatase, found in Mycolicibacterium gilvum (strain PYR-GCK) (Mycobacterium gilvum (strain PYR-GCK)).